Consider the following 300-residue polypeptide: Probable mitochondrial 2-oxodicarboxylate carrier (300 aa).

Residues 1 to 20 (MTSKGNAGNPPTPTPAPVKS) are disordered. Solcar repeat units lie at residues 21–104 (QPLW…YEKQ), 114–200 (PTQM…IKSA), and 209–295 (GVLV…VMKL). 6 consecutive transmembrane segments (helical) span residues 27–47 (LVSG…LDVV), 74–93 (LKMY…KRAI), 120–140 (IGSG…FELV), 171–191 (GFFK…GGYF), 209–229 (GVLV…TMLN), and 278–298 (LGPG…LLAG).

Belongs to the mitochondrial carrier (TC 2.A.29) family.

Its subcellular location is the mitochondrion inner membrane. It catalyses the reaction 2-oxoadipate(in) + 2-oxoglutarate(out) = 2-oxoadipate(out) + 2-oxoglutarate(in). The catalysed reaction is hexanedioate(in) + 2-oxoglutarate(out) = hexanedioate(out) + 2-oxoglutarate(in). It carries out the reaction L-2-aminoadipate(in) + 2-oxoglutarate(out) = L-2-aminoadipate(out) + 2-oxoglutarate(in). The enzyme catalyses glutarate(in) + 2-oxoglutarate(out) = glutarate(out) + 2-oxoglutarate(in). It catalyses the reaction 2-oxoheptanedioate(in) + 2-oxoglutarate(out) = 2-oxoheptanedioate(out) + 2-oxoglutarate(in). The catalysed reaction is heptanedioate(in) + 2-oxoglutarate(out) = heptanedioate(out) + 2-oxoglutarate(in). It carries out the reaction citrate(in) + 2-oxoglutarate(out) = citrate(out) + 2-oxoglutarate(in). Transports dicarboxylates across the inner membranes of mitochondria by a counter-exchange mechanism. Can transport 2-oxoadipate (2-oxohexanedioate), 2-oxoglutarate, adipate (hexanedioate), glutarate, and to a lesser extent, pimelate (heptanedioate), 2-oxopimelate (2-oxoheptanedioate), 2-aminoadipate (2-aminohexanedioate), oxaloacetate, and citrate. Plays a central role in catabolism of lysine, hydroxylysine, and tryptophan, by transporting common metabolite intermediates (such as 2-oxoadipate) into the mitochondria, where it is converted into acetyl-CoA and can enter the citric acid (TCA) cycle. This is Probable mitochondrial 2-oxodicarboxylate carrier (mcfT) from Dictyostelium discoideum (Social amoeba).